Consider the following 331-residue polypeptide: L-lactate dehydrogenase A chain (331 aa).

Residues 29–57 and Arg98 each bind NAD(+); that span reads GMVGMASAVSILLKDLCDELAMVDVMEDK. Substrate is bound by residues Arg105, Asn137, and Arg168. An NAD(+)-binding site is contributed by Asn137. The active-site Proton acceptor is the His192. Thr247 serves as a coordination point for substrate.

Belongs to the LDH/MDH superfamily. LDH family. In terms of assembly, homotetramer.

The protein resides in the cytoplasm. It carries out the reaction (S)-lactate + NAD(+) = pyruvate + NADH + H(+). The protein operates within fermentation; pyruvate fermentation to lactate; (S)-lactate from pyruvate: step 1/1. Its function is as follows. Interconverts simultaneously and stereospecifically pyruvate and lactate with concomitant interconversion of NADH and NAD(+). This Notothenia neglecta (Yellowbelly rockcod) protein is L-lactate dehydrogenase A chain (ldha).